Reading from the N-terminus, the 690-residue chain is Glycine--tRNA ligase beta subunit (690 aa).

Belongs to the class-II aminoacyl-tRNA synthetase family. In terms of assembly, tetramer of two alpha and two beta subunits.

The protein localises to the cytoplasm. The catalysed reaction is tRNA(Gly) + glycine + ATP = glycyl-tRNA(Gly) + AMP + diphosphate. The protein is Glycine--tRNA ligase beta subunit of Buchnera aphidicola subsp. Acyrthosiphon pisum (strain Tuc7).